Consider the following 542-residue polypeptide: Probable quinate permease (542 aa).

Residues 1–22 are Cytoplasmic-facing; that stretch reads MSILALVEDRPTPKEVYNWRIY. The chain crosses the membrane as a helical span at residues 23 to 43; the sequence is LLAAVASFTSCMIGYDSAFIG. At 44 to 66 the chain is on the extracellular side; sequence TTLALSSFREEFGFNTMSKTAVN. A helical transmembrane segment spans residues 67–87; the sequence is LVSANIVSCYQAGAFFGAFLA. Topologically, residues 88–97 are cytoplasmic; it reads YPVGHFWGRK. A helical membrane pass occupies residues 98 to 118; it reads WGLLFSGAIFTLGAGLMLGAD. The Extracellular segment spans residues 119-130; the sequence is GDRGLGLLYGGR. Residues 131-151 traverse the membrane as a helical segment; the sequence is VLAGLGVGAGSNITPIYISEM. Over 152-159 the chain is Cytoplasmic; that stretch reads APPSIRGR. Residues 160 to 180 form a helical membrane-spanning segment; the sequence is LVGVYELGWQIGGLVGFWINY. Residues 181–193 lie on the Extracellular side of the membrane; the sequence is GVSETLAPSHKQW. Residues 194-214 traverse the membrane as a helical segment; sequence IIPFAVQLIPSGLLLIGAVFL. Topologically, residues 215–285 are cytoplasmic; it reads KESPRWLFSR…AGTNKKVMYR (71 aa). A helical membrane pass occupies residues 286–306; that stretch reads LFLGSMLFFWQNGSGINAINY. At 307 to 325 the chain is on the extracellular side; sequence YSPTVFKSIGLQGANTSMF. The chain crosses the membrane as a helical span at residues 326–346; that stretch reads STGIFGVVKTVVTFVWLLYLI. The Cytoplasmic portion of the chain corresponds to 347 to 352; sequence DRLGRR. Residues 353–373 traverse the membrane as a helical segment; sequence LLLLIGAAGASVCLFIVGAYI. Residues 374-387 are Extracellular-facing; sequence KIADPASNPTQEMT. The helical transmembrane segment at 388-408 threads the bilayer; it reads GGGIAAMFFFYLYTVFYTPSW. Topologically, residues 409–456 are cytoplasmic; the sequence is NGTPWVMNSEMFEPNMRSLAQACAAASNWFWNFLISRFTPQMFAKMEY. The chain crosses the membrane as a helical span at residues 457 to 477; the sequence is GVWFFFASLMVLSIVFVFFLL. At 478–542 the chain is on the extracellular side; the sequence is PETKGIPLES…EHLSEDLPKV (65 aa). Residues 519-542 form a disordered region; it reads IEESGYSKTGDQQVEHLSEDLPKV. Basic and acidic residues predominate over residues 531–542; it reads QVEHLSEDLPKV.

Belongs to the major facilitator superfamily. Sugar transporter (TC 2.A.1.1) family. In terms of assembly, interacts with creB. Ubiquitinated. Deubiquitinated by creB, probably to control its activity or amount.

Its subcellular location is the cell membrane. In terms of biological role, integral membrane transporter that imports quinic acid to be catabolized as a carbon source. The chain is Probable quinate permease (qutD) from Neosartorya fischeri (strain ATCC 1020 / DSM 3700 / CBS 544.65 / FGSC A1164 / JCM 1740 / NRRL 181 / WB 181) (Aspergillus fischerianus).